The chain runs to 65 residues: Large ribosomal subunit protein uL29 (65 aa).

This sequence belongs to the universal ribosomal protein uL29 family.

The polypeptide is Large ribosomal subunit protein uL29 (Mycoplasmopsis pulmonis (strain UAB CTIP) (Mycoplasma pulmonis)).